Consider the following 407-residue polypeptide: Multidrug resistance protein MdtH (407 aa).

A run of 10 helical transmembrane segments spans residues 13 to 33, 88 to 108, 139 to 159, 163 to 183, 210 to 230, 247 to 267, 277 to 297, 298 to 318, 340 to 360, and 368 to 388; these read CFLIIDNMFVVIGFYVVFPLI, LGFIIMSVANTPLLLCLSCML, VLMLEDSMCAIIGIVLGTWLL, FKLVCFTGAILFFIAGVFNAW, FVIYVFTLTGYYILSAQVMLM, WMYIIEAILSLLLIMPITWWS, LMVGLITMIISLFPIGLVKNL, HTLLILISLFYIGSIIAEPAR, LSLALGGTVGYSGSGWLYDIG, and LPWIILSIIGLITLLGLYCQF.

It belongs to the major facilitator superfamily. DHA1 family. MdtH (TC 2.A.1.2.21) subfamily.

It localises to the cell inner membrane. The polypeptide is Multidrug resistance protein MdtH (Blochmanniella pennsylvanica (strain BPEN)).